A 123-amino-acid chain; its full sequence is Small ribosomal subunit protein uS13 (123 aa).

It belongs to the universal ribosomal protein uS13 family. As to quaternary structure, part of the 30S ribosomal subunit. Forms a loose heterodimer with protein S19. Forms two bridges to the 50S subunit in the 70S ribosome.

Located at the top of the head of the 30S subunit, it contacts several helices of the 16S rRNA. In the 70S ribosome it contacts the 23S rRNA (bridge B1a) and protein L5 of the 50S subunit (bridge B1b), connecting the 2 subunits; these bridges are implicated in subunit movement. Contacts the tRNAs in the A and P-sites. This chain is Small ribosomal subunit protein uS13, found in Anaplasma marginale (strain St. Maries).